We begin with the raw amino-acid sequence, 86 residues long: Small ribosomal subunit protein bS16 (86 aa).

This sequence belongs to the bacterial ribosomal protein bS16 family.

The protein is Small ribosomal subunit protein bS16 of Methylibium petroleiphilum (strain ATCC BAA-1232 / LMG 22953 / PM1).